The following is a 523-amino-acid chain: UDP-glucuronosyltransferase 3A1 (523 aa).

Residues 1–23 (MAVGRKSLILSLLIQHFVLLHGA) form the signal peptide. At 24–483 (KILTVCFLGG…YSYQQPLYQQ (460 aa)) the chain is on the extracellular side. A glycan (N-linked (GlcNAc...) asparagine) is linked at asparagine 125. A helical membrane pass occupies residues 484–504 (YLLDVFLFVCVCVIGACYLTV). Residues 505 to 523 (KLLKMFIQKLCSFRKLKQN) are Cytoplasmic-facing.

The protein belongs to the UDP-glycosyltransferase family.

It is found in the membrane. The catalysed reaction is glucuronate acceptor + UDP-alpha-D-glucuronate = acceptor beta-D-glucuronoside + UDP + H(+). Its function is as follows. UDP-glucuronosyltransferases catalyze phase II biotransformation reactions in which lipophilic substrates are conjugated with glucuronic acid to increase water solubility and enhance excretion. They are of major importance in the conjugation and subsequent elimination of potentially toxic xenobiotics and endogenous compounds. The sequence is that of UDP-glucuronosyltransferase 3A1 (ugt3a1) from Xenopus laevis (African clawed frog).